Reading from the N-terminus, the 467-residue chain is Cobyrinate a,c-diamide synthase (467 aa).

Residues 256–449 (RVGYAADQAF…AHIHVEGAPE (194 aa)) form the GATase cobBQ-type domain. Cysteine 338 functions as the Nucleophile in the catalytic mechanism.

Belongs to the CobB/CbiA family. Mg(2+) is required as a cofactor.

It catalyses the reaction cob(II)yrinate + 2 L-glutamine + 2 ATP + 2 H2O = cob(II)yrinate a,c diamide + 2 L-glutamate + 2 ADP + 2 phosphate + 2 H(+). The protein operates within cofactor biosynthesis; adenosylcobalamin biosynthesis; cob(II)yrinate a,c-diamide from sirohydrochlorin (anaerobic route): step 10/10. Functionally, catalyzes the ATP-dependent amidation of the two carboxylate groups at positions a and c of cobyrinate, using either L-glutamine or ammonia as the nitrogen source. This chain is Cobyrinate a,c-diamide synthase, found in Magnetococcus marinus (strain ATCC BAA-1437 / JCM 17883 / MC-1).